We begin with the raw amino-acid sequence, 511 residues long: MVLLAAAVCTKAGKAIVSRQFVEMTRTRIEGLLAAFPKLMNTGKQHTFVETESVRYVYQPMEKLYMVLITTKNSNILEDLETLRLFSRVIPEYCRALEENEISEHCFDLIFAFDEIVALGYRENVNLAQIRTFTEMDSHEEKVFRAVRETQEREAKAEMRRKAKELQQARRDAERQGKKAPGFGGFGSSAVSGGSTAAMITETIIETDKPKVAPAPARPSGPSKALKLGAKGKEVDNFVDKLKSEGETIMSSSMGKRTSEATKMHAPPINMESVHMKIEEKITLTCGRDGGLQNMELHGMIMLRISDDKYGRIRLHVENEDKKGVQLQTHPNVDKKLFTAESLIGLKNPEKSFPVNSDVGVLKWRLQTTEESFIPLTINCWPSESGNGCDVNIEYELQEDNLELNDVVITIPLPSGVGAPVIGEIDGEYRHDSRRNTLEWCLPVIDAKNKSGSLEFSIAGQPNDFFPVQVSFVSKKNYCNIQVTKVTQVDGNSPVRFSTETTFLVDKYEIL.

Positions 168-177 (QARRDAERQG) are enriched in basic and acidic residues. The interval 168–188 (QARRDAERQGKKAPGFGGFGS) is disordered. Phosphoserine is present on Ser223. 2 positions are modified to N6-acetyllysine: Lys233 and Lys241. Ser244 carries the phosphoserine modification. Residues 271-511 (MESVHMKIEE…TFLVDKYEIL (241 aa)) enclose the MHD domain. N6-acetyllysine occurs at positions 309 and 351. A Phosphoserine modification is found at Ser493.

Belongs to the adaptor complexes medium subunit family. Delta-COP subfamily. In terms of assembly, oligomeric complex that consists of at least the alpha, beta, beta', gamma, delta, epsilon and zeta subunits. In terms of tissue distribution, ubiquitously expressed.

It is found in the cytoplasm. The protein resides in the golgi apparatus membrane. Its subcellular location is the cytoplasmic vesicle. The protein localises to the COPI-coated vesicle membrane. Functionally, component of the coatomer, a cytosolic protein complex that binds to dilysine motifs and reversibly associates with Golgi non-clathrin-coated vesicles, which further mediate biosynthetic protein transport from the ER, via the Golgi up to the trans Golgi network. The coatomer complex is required for budding from Golgi membranes, and is essential for the retrograde Golgi-to-ER transport of dilysine-tagged proteins. In mammals, the coatomer can only be recruited by membranes associated to ADP-ribosylation factors (ARFs), which are small GTP-binding proteins; the complex also influences the Golgi structural integrity, as well as the processing, activity, and endocytic recycling of LDL receptors. In Homo sapiens (Human), this protein is Coatomer subunit delta (ARCN1).